An 86-amino-acid chain; its full sequence is Small ribosomal subunit protein bS18 (86 aa).

The protein belongs to the bacterial ribosomal protein bS18 family. In terms of assembly, part of the 30S ribosomal subunit. Forms a tight heterodimer with protein bS6.

Functionally, binds as a heterodimer with protein bS6 to the central domain of the 16S rRNA, where it helps stabilize the platform of the 30S subunit. The polypeptide is Small ribosomal subunit protein bS18 (Protochlamydia amoebophila (strain UWE25)).